The primary structure comprises 393 residues: Phosphoglycerate kinase (393 aa).

Substrate-binding positions include 21–23, R37, 60–63, R119, and R152; these read DFN and HLGR. Residues K202, G291, E322, and 348 to 351 contribute to the ATP site; that span reads GGDT.

Belongs to the phosphoglycerate kinase family. Monomer.

The protein localises to the cytoplasm. It carries out the reaction (2R)-3-phosphoglycerate + ATP = (2R)-3-phospho-glyceroyl phosphate + ADP. The protein operates within carbohydrate degradation; glycolysis; pyruvate from D-glyceraldehyde 3-phosphate: step 2/5. The polypeptide is Phosphoglycerate kinase (Coprothermobacter proteolyticus (strain ATCC 35245 / DSM 5265 / OCM 4 / BT)).